Consider the following 348-residue polypeptide: Protein pelota homolog (348 aa).

It belongs to the eukaryotic release factor 1 family. Pelota subfamily. Monomer. The cofactor is a divalent metal cation.

It is found in the cytoplasm. Its function is as follows. May function in recognizing stalled ribosomes, interact with stem-loop structures in stalled mRNA molecules, and effect endonucleolytic cleavage of the mRNA. May play a role in the release non-functional ribosomes and degradation of damaged mRNAs. Has endoribonuclease activity. This is Protein pelota homolog from Methanococcus maripaludis (strain C6 / ATCC BAA-1332).